We begin with the raw amino-acid sequence, 171 residues long: Adenine phosphoribosyltransferase (171 aa).

This sequence belongs to the purine/pyrimidine phosphoribosyltransferase family. As to quaternary structure, homodimer.

It localises to the cytoplasm. The catalysed reaction is AMP + diphosphate = 5-phospho-alpha-D-ribose 1-diphosphate + adenine. The protein operates within purine metabolism; AMP biosynthesis via salvage pathway; AMP from adenine: step 1/1. In terms of biological role, catalyzes a salvage reaction resulting in the formation of AMP, that is energically less costly than de novo synthesis. In Geobacter metallireducens (strain ATCC 53774 / DSM 7210 / GS-15), this protein is Adenine phosphoribosyltransferase.